A 208-amino-acid polypeptide reads, in one-letter code: MRMNIVQKILSATCFALLPLLAHAGAVDQLHDFLKNTRTLKAEFSQAVISRNGRKPQQSSGTIAISRPGKLRWEIVKPFPQLVVGDGEKIWIHDPELQQVTVRKAGQAIGSSPAALLSGNNDLEKNFTLKDAGEAEGMAWVDATPKAGDSGFEKVRLGFSGGDLRAMELFDSFGQTTQIRFSKIERNPALPAATFKFTPPAGADVVGE.

Positions 1 to 24 are cleaved as a signal peptide; sequence MRMNIVQKILSATCFALLPLLAHA.

This sequence belongs to the LolA family. Monomer.

The protein resides in the periplasm. Functionally, participates in the translocation of lipoproteins from the inner membrane to the outer membrane. Only forms a complex with a lipoprotein if the residue after the N-terminal Cys is not an aspartate (The Asp acts as a targeting signal to indicate that the lipoprotein should stay in the inner membrane). This chain is Outer-membrane lipoprotein carrier protein, found in Dechloromonas aromatica (strain RCB).